The chain runs to 665 residues: Long chain acyl-CoA synthetase 2 (665 aa).

228–239 (IMYTSGTTGEPK) provides a ligand contact to ATP. Positions 496–520 (DGWFHTGDIGEWQEDGSMKIIDRKK) are fatty acid-binding.

It belongs to the ATP-dependent AMP-binding enzyme family. Mg(2+) is required as a cofactor. Expressed along the entire length of the stem, but expression was not entirely epidermal specific, with some expression found in internal cell layers as well. Was expressed in leave epidermal cells, flowers (sepals, petals, stamens, filaments and carpel), siliques and developing seeds. In roots, expression was detected in an internal cell layer, probably the endodermal layer.

It is found in the endoplasmic reticulum. The catalysed reaction is a long-chain fatty acid + ATP + CoA = a long-chain fatty acyl-CoA + AMP + diphosphate. The protein operates within lipid metabolism; fatty acid metabolism. Its function is as follows. Activation of long-chain fatty acids for both synthesis of cellular lipids, and degradation via beta-oxidation. Acts in the cutin pathway. Preferentially uses palmitate, palmitoleate, oleate and linoleate. Required for repression of lateral root formation through its role in cutin biosynthesis and subsequent aerial tissues permeability. The polypeptide is Long chain acyl-CoA synthetase 2 (LACS2) (Arabidopsis thaliana (Mouse-ear cress)).